The chain runs to 283 residues: Glutamate racemase (283 aa).

Substrate is bound by residues 28-29 (DS) and 60-61 (YG). Cys92 functions as the Proton donor/acceptor in the catalytic mechanism. 93–94 (NT) serves as a coordination point for substrate. Cys204 serves as the catalytic Proton donor/acceptor. 205-206 (TH) serves as a coordination point for substrate.

This sequence belongs to the aspartate/glutamate racemases family.

The catalysed reaction is L-glutamate = D-glutamate. The protein operates within cell wall biogenesis; peptidoglycan biosynthesis. Its function is as follows. Provides the (R)-glutamate required for cell wall biosynthesis. In Klebsiella pneumoniae (strain 342), this protein is Glutamate racemase.